Reading from the N-terminus, the 668-residue chain is DNA ligase (668 aa).

Residues 37–41, 86–87, and E116 each bind NAD(+); these read DAIYD and SL. The active-site N6-AMP-lysine intermediate is K118. The NAD(+) site is built by R139, E176, K289, and K313. C407, C410, C425, and C430 together coordinate Zn(2+). One can recognise a BRCT domain in the interval 586 to 668; sequence AQSSALAGLT…RALIETREMP (83 aa).

This sequence belongs to the NAD-dependent DNA ligase family. LigA subfamily. Requires Mg(2+) as cofactor. The cofactor is Mn(2+).

It catalyses the reaction NAD(+) + (deoxyribonucleotide)n-3'-hydroxyl + 5'-phospho-(deoxyribonucleotide)m = (deoxyribonucleotide)n+m + AMP + beta-nicotinamide D-nucleotide.. Functionally, DNA ligase that catalyzes the formation of phosphodiester linkages between 5'-phosphoryl and 3'-hydroxyl groups in double-stranded DNA using NAD as a coenzyme and as the energy source for the reaction. It is essential for DNA replication and repair of damaged DNA. This is DNA ligase from Gloeobacter violaceus (strain ATCC 29082 / PCC 7421).